The chain runs to 910 residues: Anoctamin-6 (910 aa).

The Cytoplasmic segment spans residues 1 to 300 (MKKMSRNVLL…YGEKIGIYFA (300 aa)). A helical membrane pass occupies residues 301–321 (WLGYYTQMLLLAAVVGVACFL). At 322–375 (YGYLNQDNCTWSKEVCHPDIGGKIIMCPQCDRLCPFWKLNITCESSKKLCIFDS) the chain is on the extracellular side. Residue Asn329 is glycosylated (N-linked (GlcNAc...) asparagine). Disulfide bonds link Cys330–Cys371, Cys337–Cys364, Cys348–Cys806, Cys351–Cys355, and Cys595–Cys600. N-linked (GlcNAc...) asparagine glycosylation is present at Asn361. The chain crosses the membrane as a helical span at residues 376-396 (FGTLVFAVFMGVWVTLFLEFW). The Cytoplasmic segment spans residues 397–455 (KRRQAELEYEWDTVELQQEEQARPEYEARCTHVVINEITQEEERIPFTAWGKCIRITLC). A helical transmembrane segment spans residues 456–476 (ASAVFFWILLIIASVIGIIVY). At 477–509 (RLSVFIVFSAKLPKNINGTDPIQKYLTPQTATS) the chain is on the extracellular side. Asn493 carries an N-linked (GlcNAc...) asparagine glycan. A helical transmembrane segment spans residues 510 to 530 (ITASIISFIIIMILNTIYEKV). Residues 531 to 551 (AIMITNFELPRTQTDYENSLT) are Cytoplasmic-facing. The chain crosses the membrane as a helical span at residues 552 to 572 (MKMFLFQFVNYYSSCFYIAFF). Residues 573–601 (KGKFVGYPGDPVYWLGKYRNEECDPGGCL) are Extracellular-facing. The helical transmembrane segment at 602–621 (LELTTQLTIIMGGKAIWNNI) threads the bilayer. Over 622–663 (QEVLLPWIMNLIGRFHRVSGSEKITPRWEQDYHLQPMGKLGL) the chain is Cytoplasmic. Ca(2+) is bound by residues Glu623, Glu666, and Glu669. Transmembrane regions (helical) follow at residues 664–684 (FYEY…VASF) and 685–705 (PLAP…DAWK). Topologically, residues 706–722 (LTTQFRRLVPEKAQDIG) are cytoplasmic. The chain crosses the membrane as a helical span at residues 723–743 (AWQPIMQGIAILAVVTNAMII). Topologically, residues 744-836 (AFTSDMIPRL…YWHVIAAKLA (93 aa)) are extracellular. N-linked (GlcNAc...) asparagine glycans are attached at residues Asn777, Asn790, and Asn802. Residues 837–857 (FIIVMEHVIYSVKFFISYAIP) form a helical membrane-spanning segment. The Cytoplasmic portion of the chain corresponds to 858–910 (DVSKRTKSKIQREKYLTQKLLHENHLKDMTKNMGVIAERMIEAVDNNLRPKSE).

Belongs to the anoctamin family. As to quaternary structure, homodimer. In terms of tissue distribution, expressed in embryonic stem cell, fetal liver, retina, chronic myologenous leukemia and intestinal cancer.

Its subcellular location is the cell membrane. The enzyme catalyses a 1,2-diacyl-sn-glycero-3-phospho-L-serine(in) = a 1,2-diacyl-sn-glycero-3-phospho-L-serine(out). It carries out the reaction a beta-D-galactosyl-(1&lt;-&gt;1')-N-acylsphing-4-enine(out) = a beta-D-galactosyl-(1&lt;-&gt;1')-N-acylsphing-4-enine(in). It catalyses the reaction a 1,2-diacyl-sn-glycero-3-phosphocholine(in) = a 1,2-diacyl-sn-glycero-3-phosphocholine(out). Exhibits synergistic gating by Ca(2+) and voltage. Inhibited by some non-specific cation channel blockers such as: ruthenium red, 2-aminoethyl diphenylborinate (2APB), gadolinium and cadmium ions. Its activity is regulated as follows. (Microbial infection) Activated by SARS coronavirus-2/SARS-CoV-2 spike protein. Its function is as follows. Small-conductance calcium-activated nonselective cation (SCAN) channel which acts as a regulator of phospholipid scrambling in platelets and osteoblasts. Phospholipid scrambling results in surface exposure of phosphatidylserine which in platelets is essential to trigger the clotting system whereas in osteoblasts is essential for the deposition of hydroxyapatite during bone mineralization. Has calcium-dependent phospholipid scramblase activity; scrambles phosphatidylserine, phosphatidylcholine and galactosylceramide. Can generate outwardly rectifying chloride channel currents in airway epithelial cells and Jurkat T lymphocytes. (Microbial infection) Upon SARS coronavirus-2/SARS-CoV-2 infection, is activated by spike protein which increases the amplitude of spontaneous Ca(2+) signals and is required for spike-mediated syncytia. The polypeptide is Anoctamin-6 (Homo sapiens (Human)).